The primary structure comprises 351 residues: 3-dehydroquinate synthase (351 aa).

Residues 126–127 (TT), Lys138, and Lys147 each bind NAD(+). Zn(2+) is bound by residues Glu180, His244, and His260.

Belongs to the sugar phosphate cyclases superfamily. Dehydroquinate synthase family. Requires Co(2+) as cofactor. The cofactor is Zn(2+). NAD(+) serves as cofactor.

Its subcellular location is the cytoplasm. The enzyme catalyses 7-phospho-2-dehydro-3-deoxy-D-arabino-heptonate = 3-dehydroquinate + phosphate. It participates in metabolic intermediate biosynthesis; chorismate biosynthesis; chorismate from D-erythrose 4-phosphate and phosphoenolpyruvate: step 2/7. Catalyzes the conversion of 3-deoxy-D-arabino-heptulosonate 7-phosphate (DAHP) to dehydroquinate (DHQ). In Exiguobacterium sp. (strain ATCC BAA-1283 / AT1b), this protein is 3-dehydroquinate synthase.